The chain runs to 30 residues: Cycloviolacin-O1 (30 aa).

Residues glycine 1–asparagine 30 constitute a cross-link (cyclopeptide (Gly-Asn)). 3 disulfide bridges follow: cysteine 4–cysteine 21, cysteine 8–cysteine 23, and cysteine 13–cysteine 28.

This is a cyclic peptide. As to expression, expressed in leaves, petals, petioles and roots but not in runners (at protein level).

Probably participates in a plant defense mechanism. This is Cycloviolacin-O1 from Viola odorata (Sweet violet).